The following is a 269-amino-acid chain: tRNA pseudouridine synthase A (269 aa).

Asp-51 functions as the Nucleophile in the catalytic mechanism. Tyr-109 provides a ligand contact to substrate.

Belongs to the tRNA pseudouridine synthase TruA family. Homodimer.

The catalysed reaction is uridine(38/39/40) in tRNA = pseudouridine(38/39/40) in tRNA. Formation of pseudouridine at positions 38, 39 and 40 in the anticodon stem and loop of transfer RNAs. In Histophilus somni (strain 2336) (Haemophilus somnus), this protein is tRNA pseudouridine synthase A.